Here is a 406-residue protein sequence, read N- to C-terminus: 2,3-bisphosphoglycerate-independent phosphoglycerate mutase (406 aa).

The tract at residues 164 to 184 is disordered; sequence VSSNDPKKTGVQPKTIHPDDD.

Belongs to the BPG-independent phosphoglycerate mutase family. A-PGAM subfamily.

It catalyses the reaction (2R)-2-phosphoglycerate = (2R)-3-phosphoglycerate. It functions in the pathway carbohydrate degradation; glycolysis; pyruvate from D-glyceraldehyde 3-phosphate: step 3/5. Catalyzes the interconversion of 2-phosphoglycerate and 3-phosphoglycerate. The protein is 2,3-bisphosphoglycerate-independent phosphoglycerate mutase of Methanocorpusculum labreanum (strain ATCC 43576 / DSM 4855 / Z).